A 295-amino-acid chain; its full sequence is 4-hydroxy-tetrahydrodipicolinate synthase (295 aa).

Residue T47 coordinates pyruvate. Residue Y135 is the Proton donor/acceptor of the active site. The Schiff-base intermediate with substrate role is filled by K163. Position 206 (I206) interacts with pyruvate.

It belongs to the DapA family. Homodimer.

It is found in the cytoplasm. It catalyses the reaction L-aspartate 4-semialdehyde + pyruvate = (2S,4S)-4-hydroxy-2,3,4,5-tetrahydrodipicolinate + H2O + H(+). Its pathway is amino-acid biosynthesis; L-lysine biosynthesis via DAP pathway; (S)-tetrahydrodipicolinate from L-aspartate: step 3/4. Is not feedback inhibited by lysine. Its function is as follows. Catalyzes the condensation of (S)-aspartate-beta-semialdehyde [(S)-ASA] and pyruvate to 4-hydroxy-tetrahydrodipicolinate (HTPA). In Staphylococcus aureus (strain COL), this protein is 4-hydroxy-tetrahydrodipicolinate synthase.